The primary structure comprises 187 residues: ATP synthase subunit b (187 aa).

The chain crosses the membrane as a helical span at residues 36 to 53; that stretch reads PYQWVSVAMLVLIAIMLW.

The protein belongs to the ATPase B chain family. In terms of assembly, F-type ATPases have 2 components, F(1) - the catalytic core - and F(0) - the membrane proton channel. F(1) has five subunits: alpha(3), beta(3), gamma(1), delta(1), epsilon(1). F(0) has four main subunits: a(1), b(2) and c(10-14). The alpha and beta chains form an alternating ring which encloses part of the gamma chain. F(1) is attached to F(0) by a central stalk formed by the gamma and epsilon chains, while a peripheral stalk is formed by the delta and b chains.

The protein localises to the cell inner membrane. Functionally, f(1)F(0) ATP synthase produces ATP from ADP in the presence of a proton or sodium gradient. F-type ATPases consist of two structural domains, F(1) containing the extramembraneous catalytic core and F(0) containing the membrane proton channel, linked together by a central stalk and a peripheral stalk. During catalysis, ATP synthesis in the catalytic domain of F(1) is coupled via a rotary mechanism of the central stalk subunits to proton translocation. In terms of biological role, component of the F(0) channel, it forms part of the peripheral stalk, linking F(1) to F(0). This is ATP synthase subunit b from Erythrobacter litoralis (strain HTCC2594).